The following is a 99-amino-acid chain: Putative membrane protein insertion efficiency factor (99 aa).

Belongs to the UPF0161 family.

It localises to the cell membrane. Functionally, could be involved in insertion of integral membrane proteins into the membrane. The polypeptide is Putative membrane protein insertion efficiency factor (Corynebacterium glutamicum (strain ATCC 13032 / DSM 20300 / JCM 1318 / BCRC 11384 / CCUG 27702 / LMG 3730 / NBRC 12168 / NCIMB 10025 / NRRL B-2784 / 534)).